The chain runs to 246 residues: MKTVVIIAASGVGKRMKLDGGRSKQMLEIGGQPVIWHTMKAFQEASTVESVYIATLPDSIPVFKEIAKANGFTKITAIIEGGKERQDSIGNCMKLIEQEIENSGVMPDAILVHDGARPFIQPEEIDDIARLSATHGACVPATKPKDTIKYVGCNPEIFGETLDRSRLLQVQTPQGFAPAKLIEAHRLAGEEQWYATDDAALVERYFPQQAIRIYETGYHNIKITTPEDVFIGEAILAGLKARKSKN.

It belongs to the IspD/TarI cytidylyltransferase family. IspD subfamily.

It catalyses the reaction 2-C-methyl-D-erythritol 4-phosphate + CTP + H(+) = 4-CDP-2-C-methyl-D-erythritol + diphosphate. The protein operates within isoprenoid biosynthesis; isopentenyl diphosphate biosynthesis via DXP pathway; isopentenyl diphosphate from 1-deoxy-D-xylulose 5-phosphate: step 2/6. Catalyzes the formation of 4-diphosphocytidyl-2-C-methyl-D-erythritol from CTP and 2-C-methyl-D-erythritol 4-phosphate (MEP). The protein is 2-C-methyl-D-erythritol 4-phosphate cytidylyltransferase of Chlorobaculum tepidum (strain ATCC 49652 / DSM 12025 / NBRC 103806 / TLS) (Chlorobium tepidum).